The chain runs to 436 residues: Acetyl-CoA decarbonylase/synthase complex subunit delta 2 (436 aa).

The protein belongs to the CdhD family. Heterodimer of delta and gamma chains. The ACDS complex is made up of alpha, epsilon, beta, gamma and delta chains with a probable stoichiometry of (alpha(2)epsilon(2))(4)-beta(8)-(gamma(1)delta(1))(8) (Potential).

The protein operates within one-carbon metabolism; methanogenesis from acetate. Part of a complex that catalyzes the reversible cleavage of acetyl-CoA, allowing growth on acetate as sole source of carbon and energy. Probably maintains the overall quaternary structure of the ACDS complex. This chain is Acetyl-CoA decarbonylase/synthase complex subunit delta 2 (cdhD2), found in Methanosarcina acetivorans (strain ATCC 35395 / DSM 2834 / JCM 12185 / C2A).